The chain runs to 403 residues: Creatinase (403 aa).

The active site involves histidine 232.

This sequence belongs to the peptidase M24 family. Creatinase subfamily. As to quaternary structure, homodimer.

The catalysed reaction is creatine + H2O = sarcosine + urea. The sequence is that of Creatinase from Pseudomonas putida (Arthrobacter siderocapsulatus).